The primary structure comprises 505 residues: Holliday junction branch migration ATPase PINA (505 aa).

The region spanning 2-106 (NDLMLDKSAL…IVTADETQKK (105 aa)) is the PINc domain. The segment at 434-505 (PVNRGITMSN…NIKIKIKLSD (72 aa)) is KH domain. Positions 493-505 (KKNNIKIKIKLSD) are required for maximum interaction with Hjc and Hjm.

As to quaternary structure, homohexamer; the central pore (25-31 Angstroms) is large enough to hold dsDNA. In PDB:5F4H two of the 6 subunits are in an ATP-binding competent conformation. Interacts with Holliday junction resolvase Hjc; in the presence of HJ DNA this interaction decreases branch migration but not Y-DNA unwinding. Interacts with helicase Hjm (hel308) which decreases the DNA helicase activity of Hjm. Ca(2+) is required as a cofactor.

It catalyses the reaction ATP + H2O = ADP + phosphate + H(+). Functionally, promotes Holliday junction (HJ) branch migration and unwinds Y-shaped DNA (but not replication forks or dsDNA) in an ATP hydrolysis-dependent manner. Stimulates cleavage by HJ resolvase Hjc. Unwinds Y-shaped and 3'-flap DNA substrates. In the absence of other proteins stabilizes replication forks (prevents spontaneous unwinding); Hjc, Hjm (Hel308) and PINA coordinate HJ migration and cleavage of replication forks in a coordinated way. Inhibits the 5'-3' (but not 3'-5') helicase activity of helicase Hjm (Hel308) on overhang DNA. Probably acts as an ATP-dependent pump that pulls DNA through the hexamer. The sequence is that of Holliday junction branch migration ATPase PINA from Saccharolobus islandicus (strain REY15A) (Sulfolobus islandicus).